Consider the following 103-residue polypeptide: Sec-independent protein translocase protein TatA (103 aa).

Residues 1 to 21 form a helical membrane-spanning segment; that stretch reads MGNIFSPTHLIVILLIVLVLF. A disordered region spans residues 60 to 103; it reads YSKTTDVRPQQSQPLSVKRAAERRKGSSSFKEGKASVAKKQRGK.

Belongs to the TatA/E family. The Tat system comprises two distinct complexes: a TatABC complex, containing multiple copies of TatA, TatB and TatC subunits, and a separate TatA complex, containing only TatA subunits. Substrates initially bind to the TatABC complex, which probably triggers association of the separate TatA complex to form the active translocon.

The protein resides in the cell inner membrane. Its function is as follows. Part of the twin-arginine translocation (Tat) system that transports large folded proteins containing a characteristic twin-arginine motif in their signal peptide across membranes. TatA could form the protein-conducting channel of the Tat system. This Bartonella quintana (strain Toulouse) (Rochalimaea quintana) protein is Sec-independent protein translocase protein TatA.